The following is a 1072-amino-acid chain: Carbamoyl phosphate synthase large chain (1072 aa).

Residues 1 to 401 (MPKRLDINTI…SLLKAVRSLE (401 aa)) form a carboxyphosphate synthetic domain region. The ATP site is built by R129, R169, G175, G176, K208, I210, E215, G241, V242, H243, Q284, and E298. Positions 133–327 (RTLMQELNEP…IAKLAAKIAV (195 aa)) constitute an ATP-grasp 1 domain. Mg(2+)-binding residues include Q284, E298, and N300. The Mn(2+) site is built by Q284, E298, and N300. An oligomerization domain region spans residues 402–546 (LGIYHLELDH…YSTYADENES (145 aa)). A carbamoyl phosphate synthetic domain region spans residues 547-929 (IVTDRKSVVV…ALYKGLVASG (383 aa)). The ATP-grasp 2 domain maps to 671–861 (EAALTKLGIP…MANVATKVIL (191 aa)). R707, R746, E752, G777, V778, H779, S780, Q820, and E832 together coordinate ATP. Mg(2+) contacts are provided by Q820, E832, and N834. Residues Q820, E832, and N834 each coordinate Mn(2+). The MGS-like domain maps to 930 to 1072 (INIPTHGSVI…QTKRHEVVHA (143 aa)). The tract at residues 930-1072 (INIPTHGSVI…QTKRHEVVHA (143 aa)) is allosteric domain.

The protein belongs to the CarB family. Composed of two chains; the small (or glutamine) chain promotes the hydrolysis of glutamine to ammonia, which is used by the large (or ammonia) chain to synthesize carbamoyl phosphate. Tetramer of heterodimers (alpha,beta)4. Requires Mg(2+) as cofactor. The cofactor is Mn(2+).

The enzyme catalyses hydrogencarbonate + L-glutamine + 2 ATP + H2O = carbamoyl phosphate + L-glutamate + 2 ADP + phosphate + 2 H(+). The catalysed reaction is hydrogencarbonate + NH4(+) + 2 ATP = carbamoyl phosphate + 2 ADP + phosphate + 2 H(+). The protein operates within amino-acid biosynthesis; L-arginine biosynthesis; carbamoyl phosphate from bicarbonate: step 1/1. Its pathway is pyrimidine metabolism; UMP biosynthesis via de novo pathway; (S)-dihydroorotate from bicarbonate: step 1/3. Large subunit of the glutamine-dependent carbamoyl phosphate synthetase (CPSase). CPSase catalyzes the formation of carbamoyl phosphate from the ammonia moiety of glutamine, carbonate, and phosphate donated by ATP, constituting the first step of 2 biosynthetic pathways, one leading to arginine and/or urea and the other to pyrimidine nucleotides. The large subunit (synthetase) binds the substrates ammonia (free or transferred from glutamine from the small subunit), hydrogencarbonate and ATP and carries out an ATP-coupled ligase reaction, activating hydrogencarbonate by forming carboxy phosphate which reacts with ammonia to form carbamoyl phosphate. The sequence is that of Carbamoyl phosphate synthase large chain from Bacillus thuringiensis subsp. konkukian (strain 97-27).